The chain runs to 629 residues: Arginyl-tRNA--protein transferase 1 (629 aa).

Disordered stretches follow at residues 274 to 298 (QNNSNKNSTTTATTATTTTTTTNEP) and 353 to 405 (PDES…ITKE). Positions 282–295 (TTTATTATTTTTTT) are enriched in low complexity. A compositionally biased stretch (acidic residues) spans 356 to 396 (SYDDYVYDGKDDDDDDDDKDEKEDDEDEDQEDDEDEDDGNN).

Belongs to the R-transferase family.

The enzyme catalyses an N-terminal L-alpha-aminoacyl-[protein] + L-arginyl-tRNA(Arg) = an N-terminal L-arginyl-L-aminoacyl-[protein] + tRNA(Arg) + H(+). Its function is as follows. Involved in the post-translational conjugation of arginine to the N-terminal aspartate or glutamate of a protein. This arginylation is required for degradation of the protein via the ubiquitin pathway. Does not arginylate cysteine residues. This chain is Arginyl-tRNA--protein transferase 1 (ate1), found in Dictyostelium discoideum (Social amoeba).